The sequence spans 186 residues: Elongation factor P (186 aa).

The protein belongs to the elongation factor P family.

It localises to the cytoplasm. It participates in protein biosynthesis; polypeptide chain elongation. Involved in peptide bond synthesis. Stimulates efficient translation and peptide-bond synthesis on native or reconstituted 70S ribosomes in vitro. Probably functions indirectly by altering the affinity of the ribosome for aminoacyl-tRNA, thus increasing their reactivity as acceptors for peptidyl transferase. In Shewanella loihica (strain ATCC BAA-1088 / PV-4), this protein is Elongation factor P.